Reading from the N-terminus, the 201-residue chain is Large ribosomal subunit protein uL4 (201 aa).

The interval 44–68 is disordered; that stretch reads KAQKTRSEVAGTTKKSKKQKGGGAR.

The protein belongs to the universal ribosomal protein uL4 family. Part of the 50S ribosomal subunit.

One of the primary rRNA binding proteins, this protein initially binds near the 5'-end of the 23S rRNA. It is important during the early stages of 50S assembly. It makes multiple contacts with different domains of the 23S rRNA in the assembled 50S subunit and ribosome. In terms of biological role, forms part of the polypeptide exit tunnel. This Xanthomonas oryzae pv. oryzae (strain MAFF 311018) protein is Large ribosomal subunit protein uL4.